Reading from the N-terminus, the 110-residue chain is UPF0060 membrane protein Psyc_0916 (110 aa).

Transmembrane regions (helical) follow at residues 7 to 27 (VGLF…PYLW), 33 to 53 (SIWL…LLSL), 63 to 83 (AAYG…VNGI), and 87 to 107 (TWDI…MFAP).

It belongs to the UPF0060 family.

The protein localises to the cell inner membrane. The protein is UPF0060 membrane protein Psyc_0916 of Psychrobacter arcticus (strain DSM 17307 / VKM B-2377 / 273-4).